The following is a 209-amino-acid chain: Ion-translocating oxidoreductase complex subunit G (209 aa).

A helical membrane pass occupies residues 9–29; that stretch reads ATTLALFAASTTAVTAVVNML. FMN phosphoryl threonine is present on Thr-175.

It belongs to the RnfG family. In terms of assembly, the complex is composed of six subunits: RnfA, RnfB, RnfC, RnfD, RnfE and RnfG. The cofactor is FMN.

The protein resides in the cell inner membrane. In terms of biological role, part of a membrane-bound complex that couples electron transfer with translocation of ions across the membrane. The sequence is that of Ion-translocating oxidoreductase complex subunit G from Pectobacterium atrosepticum (strain SCRI 1043 / ATCC BAA-672) (Erwinia carotovora subsp. atroseptica).